The chain runs to 227 residues: 2-C-methyl-D-erythritol 4-phosphate cytidylyltransferase (227 aa).

This sequence belongs to the IspD/TarI cytidylyltransferase family. IspD subfamily.

The enzyme catalyses 2-C-methyl-D-erythritol 4-phosphate + CTP + H(+) = 4-CDP-2-C-methyl-D-erythritol + diphosphate. It participates in isoprenoid biosynthesis; isopentenyl diphosphate biosynthesis via DXP pathway; isopentenyl diphosphate from 1-deoxy-D-xylulose 5-phosphate: step 2/6. Catalyzes the formation of 4-diphosphocytidyl-2-C-methyl-D-erythritol from CTP and 2-C-methyl-D-erythritol 4-phosphate (MEP). The polypeptide is 2-C-methyl-D-erythritol 4-phosphate cytidylyltransferase (Mycobacterium marinum (strain ATCC BAA-535 / M)).